The chain runs to 37 residues: Large ribosomal subunit protein bL36 (37 aa).

Belongs to the bacterial ribosomal protein bL36 family.

In Desulforamulus reducens (strain ATCC BAA-1160 / DSM 100696 / MI-1) (Desulfotomaculum reducens), this protein is Large ribosomal subunit protein bL36.